The following is a 623-amino-acid chain: Zinc finger protein 131 (623 aa).

Positions 34–98 (TDITLIVDGH…TYTAKLMIQG (65 aa)) constitute a BTB domain. The short motif at 137 to 148 (TGKNEAKKRKIA) is the Nuclear localization signal 1 element. C2H2-type zinc fingers lie at residues 261-283 (FHCE…MKSH), 288-311 (FKCE…NCYH), and 328-350 (HVCQ…LRKH). Residues Lys289 and Lys295 each participate in a glycyl lysine isopeptide (Lys-Gly) (interchain with G-Cter in SUMO2) cross-link. Residues 317–328 (VSKKQRTGKKIH) carry the Nuclear localization signal 2 motif. The C2H2-type 4; degenerate zinc-finger motif lies at 356–381 (FECPNCHERFARNSTLKCHLTACQTG). C2H2-type zinc fingers lie at residues 392 to 414 (YECQ…LVIH) and 420 to 443 (NHCT…SDAH). Over residues 573–617 (NQEERESSQADAAEAAREDHEDAEDLETKPTVDSEAEKAENEDRT) the composition is skewed to basic and acidic residues. The disordered stretch occupies residues 573 to 623 (NQEERESSQADAAEAAREDHEDAEDLETKPTVDSEAEKAENEDRTALPVLE). Residue Lys601 forms a Glycyl lysine isopeptide (Lys-Gly) (interchain with G-Cter in SUMO) linkage.

The protein belongs to the krueppel C2H2-type zinc-finger protein family. In terms of processing, monosumoylated at Lys-601 by CBX4 and UHRF2. Sumoylation may potentiate ZNF131 inhibition of estrogen signaling. Sumoylation does not interfere with ubiquitination. Post-translationally, ubiquitinated. In terms of tissue distribution, predominant expression is found in different brain areas such as the occipital and temporal lobe, the nucleus caudatus, hippocampus, and the cerebellum as well as in testis and thymus.

It is found in the nucleus. Its function is as follows. Plays a role during development and organogenesis as well as in the function of the adult central nervous system. May be involved in transcriptional regulation as a repressor of ESR1/ER-alpha signaling. The chain is Zinc finger protein 131 (ZNF131) from Homo sapiens (Human).